Reading from the N-terminus, the 332-residue chain is Phosphatidylglycerol--prolipoprotein diacylglyceryl transferase (332 aa).

3 helical membrane-spanning segments follow: residues 18-38 (FPYF…AYIL), 66-86 (FFTW…TMVY), and 111-131 (VGLR…GGGL). R159 serves as a coordination point for a 1,2-diacyl-sn-glycero-3-phospho-(1'-sn-glycerol). 2 helical membrane passes run 249 to 269 (GFLV…IEYF) and 302 to 322 (ILCV…SAYH).

This sequence belongs to the Lgt family.

It localises to the cell inner membrane. The enzyme catalyses L-cysteinyl-[prolipoprotein] + a 1,2-diacyl-sn-glycero-3-phospho-(1'-sn-glycerol) = an S-1,2-diacyl-sn-glyceryl-L-cysteinyl-[prolipoprotein] + sn-glycerol 1-phosphate + H(+). It participates in protein modification; lipoprotein biosynthesis (diacylglyceryl transfer). Functionally, catalyzes the transfer of the diacylglyceryl group from phosphatidylglycerol to the sulfhydryl group of the N-terminal cysteine of a prolipoprotein, the first step in the formation of mature lipoproteins. The sequence is that of Phosphatidylglycerol--prolipoprotein diacylglyceryl transferase from Treponema pallidum (strain Nichols).